The primary structure comprises 655 residues: uncharacterized protein (655 aa).

The region spanning 245–469 is the PE-PPE domain; that stretch reads PGVIAQALFT…NLKVIVNLGY (225 aa).

It belongs to the mycobacterial PPE family.

This is an uncharacterized protein from Mycobacterium tuberculosis (strain ATCC 25618 / H37Rv).